Reading from the N-terminus, the 386-residue chain is Putative 8-amino-7-oxononanoate synthase (386 aa).

Residue Arg-22 coordinates substrate. 109–110 (GY) serves as a coordination point for pyridoxal 5'-phosphate. Residue His-134 participates in substrate binding. Residues Ser-182, 207-210 (DEAH), and 238-241 (TLSK) contribute to the pyridoxal 5'-phosphate site. At Lys-241 the chain carries N6-(pyridoxal phosphate)lysine. Thr-356 serves as a coordination point for substrate.

This sequence belongs to the class-II pyridoxal-phosphate-dependent aminotransferase family. BioF subfamily. As to quaternary structure, homodimer. Pyridoxal 5'-phosphate is required as a cofactor.

The catalysed reaction is 6-carboxyhexanoyl-[ACP] + L-alanine + H(+) = (8S)-8-amino-7-oxononanoate + holo-[ACP] + CO2. It participates in cofactor biosynthesis; biotin biosynthesis. In terms of biological role, catalyzes the decarboxylative condensation of pimeloyl-[acyl-carrier protein] and L-alanine to produce 8-amino-7-oxononanoate (AON), [acyl-carrier protein], and carbon dioxide. The sequence is that of Putative 8-amino-7-oxononanoate synthase (bioF) from Nostoc sp. (strain PCC 7120 / SAG 25.82 / UTEX 2576).